The sequence spans 185 residues: Ribosome-recycling factor (185 aa).

It belongs to the RRF family.

It localises to the cytoplasm. In terms of biological role, responsible for the release of ribosomes from messenger RNA at the termination of protein biosynthesis. May increase the efficiency of translation by recycling ribosomes from one round of translation to another. This is Ribosome-recycling factor from Chromobacterium violaceum (strain ATCC 12472 / DSM 30191 / JCM 1249 / CCUG 213 / NBRC 12614 / NCIMB 9131 / NCTC 9757 / MK).